The primary structure comprises 53 residues: uncharacterized protein (53 aa).

A helical membrane pass occupies residues 13–35 (FLLHSFTFPIAHCPSFSWASFFF).

The protein resides in the membrane. This is an uncharacterized protein from Saccharomyces cerevisiae (strain ATCC 204508 / S288c) (Baker's yeast).